Consider the following 127-residue polypeptide: Evasin-4 (127 aa).

Positions 1 to 23 (MAFKYWFVFAAVLYARQWLSTKC) are cleaved as a signal peptide. 4 disulfides stabilise this stretch: cysteine 50–cysteine 69, cysteine 65–cysteine 112, cysteine 86–cysteine 117, and cysteine 107–cysteine 126. Asparagine 54, asparagine 64, asparagine 70, asparagine 77, asparagine 83, asparagine 106, and asparagine 114 each carry an N-linked (GlcNAc...) asparagine glycan.

It belongs to the evasin C8 family. In terms of assembly, monomer.

The protein resides in the secreted. Salivary chemokine-binding protein which has chemokine-neutralizing activity and binds to host chemokines CCL1, CCL3, CCL5, CCL7, CCL8, CCL11, CCL14, CCL15, CCL16, CCL17, CCL18, CCL19, CCL21, CCL22, CCL23, CCL24, CCL25 and CCL26 with nanomolar affinity. Binds to CCL3 and CCL5 with 1:1 stoichiometry. Although binding to CCL25 is observed, does not inhibit CCL25-induced chemotaxis. Has been shown to reduce cardiac injury and inflammation in mice through its anti-CCL5 activity. The chain is Evasin-4 from Rhipicephalus sanguineus (Brown dog tick).